Reading from the N-terminus, the 441-residue chain is AP-2 complex subunit mu (441 aa).

The region spanning 174 to 440 is the MHD domain; that stretch reads RNELFLDVIE…IGRSGLYETR (267 aa).

This sequence belongs to the adapter complexes medium subunit family. As to quaternary structure, adapter protein complex 2 (AP-2) is a heterotetramer composed of two large adaptins (alpha-type subunit and beta-type subunits), a medium adaptin (mu-type subunit AP50) and a small adaptin (sigma-type subunit AP17). As to expression, brain, heart, lung, liver, testis and spleen.

The protein localises to the cell membrane. It is found in the membrane. Its subcellular location is the coated pit. In terms of biological role, component of the adapter complexes which link clathrin to receptors in coated vesicles. Clathrin-associated protein complexes are believed to interact with the cytoplasmic tails of membrane proteins, leading to their selection and concentration. AP50 is a subunit of the plasma membrane adapter. Essential wnt/egl-20 signaling protein that functions in wnt/egl-20-producing cells. Required for the AP-2 complex-mediated endocytosis of membrane proteins including wntless homolog mig-14 in egl-20-producing cells. During development, regulates the migration of HSN neurons and the left and right Q neuroblasts (QL and QR, respectively) and their descendants, possibly through hox gene and wnt/egl-20 gene target mab-5, and plays a role in establishing ALM and PLM neuronal cell polarity. Regulates AWB sensory neuron cilia membrane expansion during development, potentially via localization of tub-1 and PtdIns(4,5)P2 to the ciliary base. Required for the asymmetric divisions of V5 cells. This Caenorhabditis elegans protein is AP-2 complex subunit mu (dpy-23).